The sequence spans 289 residues: Serine/threonine-protein phosphatase Pgam5, mitochondrial (289 aa).

The helical transmembrane segment at 7–23 (FACGTGAGLAAYYLQRL) threads the bilayer.

Belongs to the phosphoglycerate mutase family. BPG-dependent PGAM subfamily. In terms of assembly, interacts with Pk92B/ASK1.

It localises to the mitochondrion outer membrane. It carries out the reaction O-phospho-L-seryl-[protein] + H2O = L-seryl-[protein] + phosphate. It catalyses the reaction O-phospho-L-threonyl-[protein] + H2O = L-threonyl-[protein] + phosphate. Its function is as follows. Displays phosphatase activity for serine/threonine residues, and dephosphorylates and activates Pk92B kinase. Has apparently no phosphoglycerate mutase activity. The polypeptide is Serine/threonine-protein phosphatase Pgam5, mitochondrial (Drosophila sechellia (Fruit fly)).